Consider the following 392-residue polypeptide: 5-azacytidine-induced protein 2 (392 aa).

Residues 1–197 are homodimerization; that stretch reads MDALVEDDIC…IELQKAKQTD (197 aa). 3 coiled-coil regions span residues 40-76, 102-135, and 166-196; these read ALVT…LIAR, DRDN…EVEL, and DLKI…AKQT. An interaction with TBK1 and IKBKE region spans residues 216–257; the sequence is SDNMQHAYWELKREMSNLHLVTQVQAELLRKLKTSTAIKKAC. 2 positions are modified to phosphoserine: S318 and S353. The segment at 345–365 is disordered; that stretch reads EDNSWVFPSPPKSSETAFGET.

As to quaternary structure, homodimer. Interacts with IKBKE, TBK1 and TICAM1. Interacts with TAX1BP1. Interacts with CALCOCO2. In terms of processing, ubiquitinated via 'Lys-48'-linked polyubiquitination by TRIM38, leading to its degradation.

It localises to the cytoplasm. Functionally, adapter protein which binds TBK1 and IKBKE playing a role in antiviral innate immunity. Activates serine/threonine-protein kinase TBK1 and facilitates its oligomerization. Enhances the phosphorylation of NF-kappa-B p65 subunit RELA by TBK1. Promotes TBK1-induced as well as TNF-alpha or PMA-induced activation of NF-kappa-B. Participates in IFNB promoter activation via TICAM1. This chain is 5-azacytidine-induced protein 2 (AZI2), found in Pongo abelii (Sumatran orangutan).